Here is a 224-residue protein sequence, read N- to C-terminus: Ribonuclease T (224 aa).

In terms of domain architecture, Exonuclease spans 20–194; that stretch reads VVIDVETAGF…YDTERTAELF (175 aa). Mg(2+) contacts are provided by Asp23, Glu25, His181, and Asp186. His181 serves as the catalytic Proton donor/acceptor.

It belongs to the RNase T family. In terms of assembly, homodimer. The cofactor is Mg(2+).

Trims short 3' overhangs of a variety of RNA species, leaving a one or two nucleotide 3' overhang. Responsible for the end-turnover of tRNA: specifically removes the terminal AMP residue from uncharged tRNA (tRNA-C-C-A). Also appears to be involved in tRNA biosynthesis. In Enterobacter sp. (strain 638), this protein is Ribonuclease T.